The primary structure comprises 300 residues: Aspartate carbamoyltransferase catalytic subunit (300 aa).

The carbamoyl phosphate site is built by R54 and T55. K82 is a binding site for L-aspartate. Residues R104, H131, and Q134 each coordinate carbamoyl phosphate. L-aspartate is bound by residues R164 and R213. Carbamoyl phosphate is bound by residues A256 and P257.

This sequence belongs to the aspartate/ornithine carbamoyltransferase superfamily. ATCase family. As to quaternary structure, heterododecamer (2C3:3R2) of six catalytic PyrB chains organized as two trimers (C3), and six regulatory PyrI chains organized as three dimers (R2).

The enzyme catalyses carbamoyl phosphate + L-aspartate = N-carbamoyl-L-aspartate + phosphate + H(+). It functions in the pathway pyrimidine metabolism; UMP biosynthesis via de novo pathway; (S)-dihydroorotate from bicarbonate: step 2/3. Its function is as follows. Catalyzes the condensation of carbamoyl phosphate and aspartate to form carbamoyl aspartate and inorganic phosphate, the committed step in the de novo pyrimidine nucleotide biosynthesis pathway. This chain is Aspartate carbamoyltransferase catalytic subunit, found in Malacoplasma penetrans (strain HF-2) (Mycoplasma penetrans).